Consider the following 444-residue polypeptide: Crh-like protein 3 (444 aa).

Residues M1–A19 form the signal peptide. Cysteines 27 and 34 form a disulfide. The region spanning S57–S271 is the GH16 domain. Catalysis depends on E157, which acts as the Nucleophile. E161 (proton donor) is an active-site residue. E161 contacts chitin. N-linked (GlcNAc...) asparagine glycans are attached at residues N187 and N228. Residues W248 and T259 each contribute to the chitin site. N315, N323, N336, and N371 each carry an N-linked (GlcNAc...) asparagine glycan. S415 is lipidated: GPI-anchor amidated serine. Residues A416 to L444 constitute a propeptide, removed in mature form.

Belongs to the glycosyl hydrolase 16 family. CRH1 subfamily. In terms of assembly, forms homodimers as well as heterodimers with other crh protein members crh1 and crh2. Dimerization may be necessary for the transglycosylation activity.

Its subcellular location is the cell membrane. The catalysed reaction is Random endo-hydrolysis of N-acetyl-beta-D-glucosaminide (1-&gt;4)-beta-linkages in chitin and chitodextrins.. Dual chitinase/transglycosylase that plays a role in cell wall architecture. Chitinase and transglycosylase activities are coupled. Required for the polysaccharide cross-linking at the septa and the cell wall. More specifically, transfers chitin to 1,6-beta-glucan in the cell wall. This chain is Crh-like protein 3, found in Botryotinia fuckeliana (strain B05.10) (Noble rot fungus).